The sequence spans 222 residues: Orotidine 5'-phosphate decarboxylase (222 aa).

Residues Asp-11, Lys-30, 59 to 68, Ser-115, 164 to 174, Gly-187, and Arg-188 each bind substrate; these read DFKLADIGYI and PGMGSQGGSYG. Lys-61 serves as the catalytic Proton donor.

This sequence belongs to the OMP decarboxylase family. Type 1 subfamily. In terms of assembly, homodimer.

The enzyme catalyses orotidine 5'-phosphate + H(+) = UMP + CO2. Its pathway is pyrimidine metabolism; UMP biosynthesis via de novo pathway; UMP from orotate: step 2/2. In terms of biological role, catalyzes the decarboxylation of orotidine 5'-monophosphate (OMP) to uridine 5'-monophosphate (UMP). The polypeptide is Orotidine 5'-phosphate decarboxylase (Saccharolobus solfataricus (strain ATCC 35092 / DSM 1617 / JCM 11322 / P2) (Sulfolobus solfataricus)).